A 572-amino-acid polypeptide reads, in one-letter code: Proline--tRNA ligase (572 aa).

Belongs to the class-II aminoacyl-tRNA synthetase family. ProS type 1 subfamily. Homodimer.

The protein resides in the cytoplasm. It catalyses the reaction tRNA(Pro) + L-proline + ATP = L-prolyl-tRNA(Pro) + AMP + diphosphate. In terms of biological role, catalyzes the attachment of proline to tRNA(Pro) in a two-step reaction: proline is first activated by ATP to form Pro-AMP and then transferred to the acceptor end of tRNA(Pro). As ProRS can inadvertently accommodate and process non-cognate amino acids such as alanine and cysteine, to avoid such errors it has two additional distinct editing activities against alanine. One activity is designated as 'pretransfer' editing and involves the tRNA(Pro)-independent hydrolysis of activated Ala-AMP. The other activity is designated 'posttransfer' editing and involves deacylation of mischarged Ala-tRNA(Pro). The misacylated Cys-tRNA(Pro) is not edited by ProRS. In Hydrogenovibrio crunogenus (strain DSM 25203 / XCL-2) (Thiomicrospira crunogena), this protein is Proline--tRNA ligase.